A 369-amino-acid polypeptide reads, in one-letter code: Chorismate synthase (369 aa).

NADP(+) is bound by residues Arg-48 and Arg-54. Residues 125-127, 238-239, Gly-278, 293-297, and Arg-319 each bind FMN; these read RSS, NA, and KPTSS.

Belongs to the chorismate synthase family. In terms of assembly, homotetramer. FMNH2 serves as cofactor.

The enzyme catalyses 5-O-(1-carboxyvinyl)-3-phosphoshikimate = chorismate + phosphate. The protein operates within metabolic intermediate biosynthesis; chorismate biosynthesis; chorismate from D-erythrose 4-phosphate and phosphoenolpyruvate: step 7/7. Its function is as follows. Catalyzes the anti-1,4-elimination of the C-3 phosphate and the C-6 proR hydrogen from 5-enolpyruvylshikimate-3-phosphate (EPSP) to yield chorismate, which is the branch point compound that serves as the starting substrate for the three terminal pathways of aromatic amino acid biosynthesis. This reaction introduces a second double bond into the aromatic ring system. In Cupriavidus metallidurans (strain ATCC 43123 / DSM 2839 / NBRC 102507 / CH34) (Ralstonia metallidurans), this protein is Chorismate synthase.